A 237-amino-acid polypeptide reads, in one-letter code: MAVERKFVADGVRKVRVERHLGHELKRAGYGGMDLIRTPLGTQVTIFAEKPGIVIGKGGKVVRTLTQDLATTYGVESPQIEVQQVDNPNLNAQIMAERLASALERGWYFRKAGSSTLRRIMDSGALGCEVVISGKLTGARGRVQKFTEGYIKHSGDPVNTLVDKGYAVAIKKLGVIGVQVRLIPPGAQLPDHFEVTAAVTKKQRNMAHITRIPSEYDEEDLDLDAIVNEPDDFMEEE.

The region spanning 17–86 (VERHLGHELK…SPQIEVQQVD (70 aa)) is the KH type-2 domain.

Belongs to the universal ribosomal protein uS3 family. In terms of assembly, part of the 30S ribosomal subunit.

In terms of biological role, binds the lower part of the 30S subunit head. This is Small ribosomal subunit protein uS3 from Methanospirillum hungatei JF-1 (strain ATCC 27890 / DSM 864 / NBRC 100397 / JF-1).